Here is a 347-residue protein sequence, read N- to C-terminus: Eukaryotic translation initiation factor 3 subunit I (347 aa).

WD repeat units lie at residues 8–47 (GHERPLTQVKYNKEGDLLFSCSKDSSASVWYSLNGERLGT), 50–89 (GHTGTIWSIDVDCFTKYCVTGSADYSIKLWDVSNGQCVAT), 149–190 (THEG…EYVD), 194–233 (LHEKSISDMQFSPDLTYFITSSRDTNSFLVDVSTLQVLKK), and 291–330 (GHFGPLNTVAISPQGTSYASGGEDGFIRLHHFEKSYFDFK). A Phosphoserine modification is found at S302.

The protein belongs to the eIF-3 subunit I family. In terms of assembly, component of the eukaryotic translation initiation factor 3 (eIF-3) complex.

It is found in the cytoplasm. In terms of biological role, component of the eukaryotic translation initiation factor 3 (eIF-3) complex, which is involved in protein synthesis of a specialized repertoire of mRNAs and, together with other initiation factors, stimulates binding of mRNA and methionyl-tRNAi to the 40S ribosome. The eIF-3 complex specifically targets and initiates translation of a subset of mRNAs involved in cell proliferation. The chain is Eukaryotic translation initiation factor 3 subunit I from Saccharomyces cerevisiae (strain YJM789) (Baker's yeast).